Here is a 150-residue protein sequence, read N- to C-terminus: Endoribonuclease YbeY (150 aa).

Residues H116, H120, and H126 each coordinate Zn(2+).

It belongs to the endoribonuclease YbeY family. Requires Zn(2+) as cofactor.

Its subcellular location is the cytoplasm. Its function is as follows. Single strand-specific metallo-endoribonuclease involved in late-stage 70S ribosome quality control and in maturation of the 3' terminus of the 16S rRNA. This Mesomycoplasma hyopneumoniae (strain 232) (Mycoplasma hyopneumoniae) protein is Endoribonuclease YbeY.